Reading from the N-terminus, the 1320-residue chain is FERM and PDZ domain-containing protein 4 (1320 aa).

A WW domain is found at 33–66; the sequence is QVPPYGWEMMTNRDGRDYFINHMTQAIPFDDPRF. In terms of domain architecture, PDZ spans 78-155; that stretch reads KVEMRRDPVL…SILLTVIQPY (78 aa). The FERM domain maps to 204-519; the sequence is NVLKVYLENG…GYYRLLVDSR (316 aa). Disordered stretches follow at residues 809 to 847, 897 to 927, 949 to 981, 1024 to 1050, 1114 to 1139, and 1204 to 1274; these read APPPGFRDSSDEEDTQSQATSFHEDKEQGSSLQNEEIPV, YSPESSSDSGNETNSSEMTEGSELAAAQKQS, TEFPTSKAPSVGLPPKSSHGLAARPATDLPPKV, KRKSKLPEGEGKSPLSGNIPGKKQQGT, PRGPGLGNREAEGKEDGTVEGGADDA, and GHFS…ATFE. Residues 900-913 show a composition bias toward low complexity; the sequence is ESSSDSGNETNSSE. Positions 1204–1217 are enriched in polar residues; that stretch reads GHFSLQSSQGSSVD. Low complexity predominate over residues 1223 to 1232; it reads GSSSSACATP.

As to quaternary structure, interacts (via C-terminus) with DLG1, DLG2, DLG3 and DLG4/PSD95. Interacts (via N-terminus) with ARHGEF7; the interaction is mediated by the PDZ domain. Interacts with GPSM2 (via TPR repeat region). As to expression, expressed in various regions of the brain, including cortex, hippocampus, cerebellum, olfactory bulb and medial habenular nucleus.

The protein resides in the cell projection. The protein localises to the dendritic spine. Functionally, positive regulator of dendritic spine morphogenesis and density. Required for the maintenance of excitatory synaptic transmission. Binds phosphatidylinositol 4,5-bisphosphate. The polypeptide is FERM and PDZ domain-containing protein 4 (Frmpd4) (Mus musculus (Mouse)).